Consider the following 116-residue polypeptide: Large ribosomal subunit protein bL19 (116 aa).

This sequence belongs to the bacterial ribosomal protein bL19 family.

Functionally, this protein is located at the 30S-50S ribosomal subunit interface and may play a role in the structure and function of the aminoacyl-tRNA binding site. The sequence is that of Large ribosomal subunit protein bL19 from Solidesulfovibrio magneticus (strain ATCC 700980 / DSM 13731 / RS-1) (Desulfovibrio magneticus).